Reading from the N-terminus, the 158-residue chain is Cyclic pyranopterin monophosphate synthase (158 aa).

Substrate contacts are provided by residues 76-78 (LCH) and 114-115 (ME). Residue Asp129 is part of the active site.

The protein belongs to the MoaC family. As to quaternary structure, homohexamer; trimer of dimers.

The enzyme catalyses (8S)-3',8-cyclo-7,8-dihydroguanosine 5'-triphosphate = cyclic pyranopterin phosphate + diphosphate. Its pathway is cofactor biosynthesis; molybdopterin biosynthesis. Catalyzes the conversion of (8S)-3',8-cyclo-7,8-dihydroguanosine 5'-triphosphate to cyclic pyranopterin monophosphate (cPMP). The chain is Cyclic pyranopterin monophosphate synthase from Shewanella halifaxensis (strain HAW-EB4).